We begin with the raw amino-acid sequence, 230 residues long: Putative 14-3-3-like protein GF14-H (230 aa).

The protein belongs to the 14-3-3 family.

Its function is as follows. Is associated with a DNA binding complex that binds to the G box, a well-characterized cis-acting DNA regulatory element found in plant genes. In Oryza sativa subsp. japonica (Rice), this protein is Putative 14-3-3-like protein GF14-H (GF14H).